The following is a 267-amino-acid chain: Ribosomal RNA small subunit methyltransferase A (267 aa).

Residues histidine 13, leucine 15, glycine 40, glutamate 61, aspartate 85, and asparagine 105 each coordinate S-adenosyl-L-methionine.

This sequence belongs to the class I-like SAM-binding methyltransferase superfamily. rRNA adenine N(6)-methyltransferase family. RsmA subfamily.

It is found in the cytoplasm. The enzyme catalyses adenosine(1518)/adenosine(1519) in 16S rRNA + 4 S-adenosyl-L-methionine = N(6)-dimethyladenosine(1518)/N(6)-dimethyladenosine(1519) in 16S rRNA + 4 S-adenosyl-L-homocysteine + 4 H(+). Functionally, specifically dimethylates two adjacent adenosines (A1518 and A1519) in the loop of a conserved hairpin near the 3'-end of 16S rRNA in the 30S particle. May play a critical role in biogenesis of 30S subunits. The protein is Ribosomal RNA small subunit methyltransferase A of Bacteroides thetaiotaomicron (strain ATCC 29148 / DSM 2079 / JCM 5827 / CCUG 10774 / NCTC 10582 / VPI-5482 / E50).